Reading from the N-terminus, the 210-residue chain is Putative 3-methyladenine DNA glycosylase (210 aa).

This sequence belongs to the DNA glycosylase MPG family.

The chain is Putative 3-methyladenine DNA glycosylase from Corynebacterium glutamicum (strain R).